Reading from the N-terminus, the 335-residue chain is Fructose-1,6-bisphosphatase class 1 (335 aa).

4 residues coordinate Mg(2+): Glu89, Asp112, Leu114, and Asp115. Substrate is bound by residues 115-118, Asn208, Tyr241, and Lys271; that span reads DGSS. Mg(2+) is bound at residue Glu277.

This sequence belongs to the FBPase class 1 family. As to quaternary structure, homotetramer. Requires Mg(2+) as cofactor.

Its subcellular location is the cytoplasm. It catalyses the reaction beta-D-fructose 1,6-bisphosphate + H2O = beta-D-fructose 6-phosphate + phosphate. The protein operates within carbohydrate biosynthesis; gluconeogenesis. This is Fructose-1,6-bisphosphatase class 1 from Proteus mirabilis (strain HI4320).